Here is a 152-residue protein sequence, read N- to C-terminus: Large ribosomal subunit protein bL9 (152 aa).

This sequence belongs to the bacterial ribosomal protein bL9 family.

In terms of biological role, binds to the 23S rRNA. The sequence is that of Large ribosomal subunit protein bL9 from Streptococcus thermophilus (strain ATCC BAA-491 / LMD-9).